A 175-amino-acid polypeptide reads, in one-letter code: Protein-export protein SecB (175 aa).

The protein belongs to the SecB family. In terms of assembly, homotetramer, a dimer of dimers. One homotetramer interacts with 1 SecA dimer.

The protein resides in the cytoplasm. Functionally, one of the proteins required for the normal export of preproteins out of the cell cytoplasm. It is a molecular chaperone that binds to a subset of precursor proteins, maintaining them in a translocation-competent state. It also specifically binds to its receptor SecA. This Anaplasma marginale (strain Florida) protein is Protein-export protein SecB.